The primary structure comprises 385 residues: Lipoyl synthase, mitochondrial (385 aa).

7 residues coordinate [4Fe-4S] cluster: Cys-107, Cys-112, Cys-118, Cys-137, Cys-141, Cys-144, and Ser-352. A Radical SAM core domain is found at 122–341 (KKSEATATIM…RDTALKMGFL (220 aa)).

It belongs to the radical SAM superfamily. Lipoyl synthase family. The cofactor is [4Fe-4S] cluster.

The protein localises to the mitochondrion. It carries out the reaction [[Fe-S] cluster scaffold protein carrying a second [4Fe-4S](2+) cluster] + N(6)-octanoyl-L-lysyl-[protein] + 2 oxidized [2Fe-2S]-[ferredoxin] + 2 S-adenosyl-L-methionine + 4 H(+) = [[Fe-S] cluster scaffold protein] + N(6)-[(R)-dihydrolipoyl]-L-lysyl-[protein] + 4 Fe(3+) + 2 hydrogen sulfide + 2 5'-deoxyadenosine + 2 L-methionine + 2 reduced [2Fe-2S]-[ferredoxin]. It participates in protein modification; protein lipoylation via endogenous pathway; protein N(6)-(lipoyl)lysine from octanoyl-[acyl-carrier-protein]: step 2/2. In terms of biological role, catalyzes the radical-mediated insertion of two sulfur atoms into the C-6 and C-8 positions of the octanoyl moiety bound to the lipoyl domains of lipoate-dependent enzymes, thereby converting the octanoylated domains into lipoylated derivatives. This chain is Lipoyl synthase, mitochondrial, found in Meyerozyma guilliermondii (strain ATCC 6260 / CBS 566 / DSM 6381 / JCM 1539 / NBRC 10279 / NRRL Y-324) (Yeast).